The sequence spans 477 residues: UDP-N-acetylmuramate--L-alanine ligase (477 aa).

122 to 128 is an ATP binding site; it reads GTHGKTT.

It belongs to the MurCDEF family.

It is found in the cytoplasm. The enzyme catalyses UDP-N-acetyl-alpha-D-muramate + L-alanine + ATP = UDP-N-acetyl-alpha-D-muramoyl-L-alanine + ADP + phosphate + H(+). It participates in cell wall biogenesis; peptidoglycan biosynthesis. In terms of biological role, cell wall formation. This is UDP-N-acetylmuramate--L-alanine ligase from Xanthomonas axonopodis pv. citri (strain 306).